The primary structure comprises 142 residues: Hemoglobin subunit alpha (142 aa).

Residues 2 to 142 (VLSADDKANI…VSTVLTSKYR (141 aa)) enclose the Globin domain. S4 carries the post-translational modification Phosphoserine. An N6-succinyllysine mark is found at K8 and K12. Residue K17 is modified to N6-acetyllysine; alternate. K17 is modified (N6-succinyllysine; alternate). Residue Y25 is modified to Phosphotyrosine. S36 bears the Phosphoserine mark. K41 bears the N6-succinyllysine mark. S50 is modified (phosphoserine). H59 serves as a coordination point for O2. H88 is a binding site for heme b. The residue at position 109 (T109) is a Phosphothreonine. Phosphoserine is present on residues S125 and S132. T135 and T138 each carry phosphothreonine. At S139 the chain carries Phosphoserine.

The protein belongs to the globin family. Heterotetramer of two alpha chains and two beta chains. Red blood cells.

Its function is as follows. Involved in oxygen transport from the lung to the various peripheral tissues. Hemopressin acts as an antagonist peptide of the cannabinoid receptor CNR1. Hemopressin-binding efficiently blocks cannabinoid receptor CNR1 and subsequent signaling. The polypeptide is Hemoglobin subunit alpha (HBA) (Cricetomys gambianus (Northern giant pouched rat)).